A 252-amino-acid chain; its full sequence is tRNA (guanine-N(1)-)-methyltransferase (252 aa).

Residues G116 and 135 to 140 each bind S-adenosyl-L-methionine; that span reads LGDYVL.

The protein belongs to the RNA methyltransferase TrmD family. As to quaternary structure, homodimer.

The protein localises to the cytoplasm. The catalysed reaction is guanosine(37) in tRNA + S-adenosyl-L-methionine = N(1)-methylguanosine(37) in tRNA + S-adenosyl-L-homocysteine + H(+). In terms of biological role, specifically methylates guanosine-37 in various tRNAs. This is tRNA (guanine-N(1)-)-methyltransferase from Limosilactobacillus fermentum (strain NBRC 3956 / LMG 18251) (Lactobacillus fermentum).